The following is a 610-amino-acid chain: UvrABC system protein C (610 aa).

In terms of domain architecture, GIY-YIG spans serine 16–valine 94. The region spanning glutamine 204–valine 239 is the UVR domain.

The protein belongs to the UvrC family. Interacts with UvrB in an incision complex.

Its subcellular location is the cytoplasm. The UvrABC repair system catalyzes the recognition and processing of DNA lesions. UvrC both incises the 5' and 3' sides of the lesion. The N-terminal half is responsible for the 3' incision and the C-terminal half is responsible for the 5' incision. The protein is UvrABC system protein C of Yersinia pseudotuberculosis serotype O:1b (strain IP 31758).